Reading from the N-terminus, the 74-residue chain is UPF0435 protein BAA_0470 (74 aa).

This sequence belongs to the UPF0435 family.

The chain is UPF0435 protein BAA_0470 from Bacillus anthracis (strain A0248).